The chain runs to 208 residues: Bacitracin transport permease protein BCRB (208 aa).

Transmembrane regions (helical) follow at residues 23-43 (LYIV…YLFN), 70-90 (VLLL…TLLF), 111-131 (FMIG…VTLL), 135-155 (YVPT…VYGT), 159-179 (ALFP…PEYP), and 182-202 (YSFI…IVYF).

The protein resides in the cell membrane. Part of the binding-protein-dependent transport system for bacitracin that confer resistance to this antibiotic; probably responsible for the translocation of the substrate across the membrane. The sequence is that of Bacitracin transport permease protein BCRB (bcrB) from Bacillus licheniformis.